Reading from the N-terminus, the 478-residue chain is Proline--tRNA ligase (478 aa).

This sequence belongs to the class-II aminoacyl-tRNA synthetase family. ProS type 3 subfamily. As to quaternary structure, homodimer.

It localises to the cytoplasm. The catalysed reaction is tRNA(Pro) + L-proline + ATP = L-prolyl-tRNA(Pro) + AMP + diphosphate. Functionally, catalyzes the attachment of proline to tRNA(Pro) in a two-step reaction: proline is first activated by ATP to form Pro-AMP and then transferred to the acceptor end of tRNA(Pro). The chain is Proline--tRNA ligase from Clostridium botulinum (strain Loch Maree / Type A3).